A 319-amino-acid chain; its full sequence is tRNA pseudouridine synthase B (319 aa).

Catalysis depends on D47, which acts as the Nucleophile.

This sequence belongs to the pseudouridine synthase TruB family. Type 1 subfamily.

The enzyme catalyses uridine(55) in tRNA = pseudouridine(55) in tRNA. Functionally, responsible for synthesis of pseudouridine from uracil-55 in the psi GC loop of transfer RNAs. The polypeptide is tRNA pseudouridine synthase B (Pseudoalteromonas translucida (strain TAC 125)).